The sequence spans 199 residues: MAPRSAEASRKTKETDISVSVHVDGSGKSDIATGVGFFDHMLDQLSRHSLIDMTVRAKGDLHIDDHHTVEDTGIALGQALTKALGERRGIMRYASIDLAMDETLTRAAIDVSGRPFLVWNVSFSSPKIGTFDTELVREFFQALAQNAGITLHVTNHYGANNHHIAETCFKAVARALRAALEPDPRQPDAVPSTKGSLKG.

It belongs to the imidazoleglycerol-phosphate dehydratase family.

The protein localises to the cytoplasm. It carries out the reaction D-erythro-1-(imidazol-4-yl)glycerol 3-phosphate = 3-(imidazol-4-yl)-2-oxopropyl phosphate + H2O. It functions in the pathway amino-acid biosynthesis; L-histidine biosynthesis; L-histidine from 5-phospho-alpha-D-ribose 1-diphosphate: step 6/9. The protein is Imidazoleglycerol-phosphate dehydratase of Mesorhizobium japonicum (strain LMG 29417 / CECT 9101 / MAFF 303099) (Mesorhizobium loti (strain MAFF 303099)).